The chain runs to 782 residues: Translation initiation factor IF-2 (782 aa).

The tract at residues 47-196 (DNAIDGTNKK…TPPKPKELPE (150 aa)) is disordered. Over residues 53–65 (TNKKAEAPKKETT) the composition is skewed to basic and acidic residues. The span at 66–81 (SNENGNSKGPNKPNMT) shows a compositional bias: polar residues. Positions 82 to 93 (NSNEKSNKPNKP) are enriched in low complexity. Residues 115–129 (KPANTSNQTQSSGNK) show a composition bias toward polar residues. The segment covering 133 to 170 (GGQKRNNNNNSNRPGGGNPNRPGGNNRPNRGGNFNNKG) has biased composition (low complexity). One can recognise a tr-type G domain in the interval 283–452 (ERPPVVTIMG…LLVSEVEELK (170 aa)). The interval 292 to 299 (GHVDHGKT) is G1. 292 to 299 (GHVDHGKT) provides a ligand contact to GTP. Residues 317–321 (GITQH) form a G2 region. The tract at residues 338 to 341 (DTPG) is G3. Residues 338–342 (DTPGH) and 392–395 (NKID) contribute to the GTP site. The interval 392 to 395 (NKID) is G4. The G5 stretch occupies residues 428–430 (SAK).

This sequence belongs to the TRAFAC class translation factor GTPase superfamily. Classic translation factor GTPase family. IF-2 subfamily.

It is found in the cytoplasm. Its function is as follows. One of the essential components for the initiation of protein synthesis. Protects formylmethionyl-tRNA from spontaneous hydrolysis and promotes its binding to the 30S ribosomal subunits. Also involved in the hydrolysis of GTP during the formation of the 70S ribosomal complex. The polypeptide is Translation initiation factor IF-2 (Listeria innocua serovar 6a (strain ATCC BAA-680 / CLIP 11262)).